The following is a 106-amino-acid chain: NADH-quinone oxidoreductase subunit K (106 aa).

3 consecutive transmembrane segments (helical) span residues 9–29 (LGHY…GIFL), 35–55 (IVML…MVAF), and 70–90 (FILT…VIYF).

The protein belongs to the complex I subunit 4L family. NDH-1 is composed of 14 different subunits. Subunits NuoA, H, J, K, L, M, N constitute the membrane sector of the complex.

The protein resides in the cell inner membrane. The enzyme catalyses a quinone + NADH + 5 H(+)(in) = a quinol + NAD(+) + 4 H(+)(out). Its function is as follows. NDH-1 shuttles electrons from NADH, via FMN and iron-sulfur (Fe-S) centers, to quinones in the respiratory chain. The immediate electron acceptor for the enzyme in this species is believed to be ubiquinone. Couples the redox reaction to proton translocation (for every two electrons transferred, four hydrogen ions are translocated across the cytoplasmic membrane), and thus conserves the redox energy in a proton gradient. This Granulibacter bethesdensis (strain ATCC BAA-1260 / CGDNIH1) protein is NADH-quinone oxidoreductase subunit K.